A 793-amino-acid chain; its full sequence is DNA mismatch repair protein MutS (793 aa).

589–596 is a binding site for ATP; sequence GPNMSGKS.

This sequence belongs to the DNA mismatch repair MutS family.

This protein is involved in the repair of mismatches in DNA. It is possible that it carries out the mismatch recognition step. This protein has a weak ATPase activity. This Thermotoga sp. (strain RQ2) protein is DNA mismatch repair protein MutS.